The sequence spans 217 residues: Dense granule protein 1 (217 aa).

The first 19 residues, 1–19, serve as a signal peptide directing secretion; sequence MARQATFIVALCVCGLAIA. Residues 171–183 are compositionally biased toward polar residues; the sequence is VASEDSALGNSEE. The tract at residues 171–217 is disordered; that stretch reads VASEDSALGNSEEQYVEGTVNGSSDPEQERAGGPLIPEGDEQEVDTE. N-linked (GlcNAc...) asparagine glycosylation is present at Asn191. Acidic residues predominate over residues 208 to 217; that stretch reads EGDEQEVDTE.

It belongs to the Gra7 family.

The protein localises to the secreted. The chain is Dense granule protein 1 (DG1) from Neospora caninum (Coccidian parasite).